Consider the following 434-residue polypeptide: Angio-associated migratory cell protein (434 aa).

Positions 1-63 (MESESESGAA…EEEEEEGNEE (63 aa)) are disordered. Ser-20 carries the post-translational modification Phosphoserine. The segment covering 39-62 (DPDDLAQEMEDVDFEEEEEEEGNE) has biased composition (acidic residues). 8 WD repeats span residues 89–129 (LHSA…LLFE), 132–171 (GHKD…EVWS), 173–212 (EAGD…KTFQ), 214–254 (PNCP…HVLK), 258–299 (GHQG…GVFR), 315–354 (SESN…LRHQ), 356–395 (QHQS…LLTD), and 398–433 (GHTA…QRPD).

Expressed in metastatic melanoma, liver, skin, kidney, heart, lung, lymph node, skeletal muscle and brain, and also in A2058 melanoma cells and activated T-cells (at protein level). Expressed in blood vessels. Strongly expressed in endothelial cells, cytotrophoblasts, and poorly differentiated. colon adenocarcinoma cells found in lymphatics.

It is found in the cell membrane. It localises to the cytoplasm. Functionally, plays a role in angiogenesis and cell migration. In smooth muscle cell migration, may act through the RhoA pathway. The polypeptide is Angio-associated migratory cell protein (AAMP) (Homo sapiens (Human)).